The following is a 261-amino-acid chain: 14-3-3 protein 8 (261 aa).

The segment at 237–261 is disordered; it reads DIPEDGEEAPKGDAANKVGAGEDAE.

This sequence belongs to the 14-3-3 family. As to quaternary structure, homodimer.

In Solanum lycopersicum (Tomato), this protein is 14-3-3 protein 8 (TFT8).